Consider the following 815-residue polypeptide: ABC transporter G family member 7 (815 aa).

Disordered stretches follow at residues 81–141 (NNID…TPNF) and 177–249 (KQIK…TNGK). A coiled-coil region spans residues 164-199 (ENISYKTENRNYKKQIKDEKKRKKKLEMERSNSSNS). The span at 194 to 210 (SNSSNSNSSYDVESSAS) shows a compositional bias: low complexity. Polar residues predominate over residues 211-248 (GLQTPQQSRSSILPTNSLNISKIDQSMNPQQTRSTTNG). In terms of domain architecture, ABC transporter spans 242–485 (TRSTTNGKIE…SLPNQYQCPN (244 aa)). An ATP-binding site is contributed by 274–281 (GPSGSGKS). Residues 562 to 810 (TQYITRLSGG…VSGYWAISKL (249 aa)) form the ABC transmembrane type-2 domain. 7 helical membrane passes run 568-588 (LSGGFMIGLLFSACFGTLSPS), 598-618 (ILFFLIAVLNLIPFTCITLFL), 647-667 (AFIQFLVSLIVSLLVYTINHL), 675-695 (FITYFILYLINLLSDLYIIAI), 706-726 (FIYGTTISITFLLFMGHLVPV), 732-752 (SFGWIHWLNPLYYGYATVMVA), and 788-808 (GIGIIILWICFFFVSGYWAIS).

This sequence belongs to the ABC transporter superfamily. ABCG family.

The protein localises to the membrane. This is ABC transporter G family member 7 (abcG7) from Dictyostelium discoideum (Social amoeba).